Reading from the N-terminus, the 383-residue chain is Probable acyl-CoA dehydrogenase YdiO (383 aa).

This sequence belongs to the acyl-CoA dehydrogenase family. FAD serves as cofactor.

It carries out the reaction a 2,3-saturated acyl-CoA + A = a 2,3-dehydroacyl-CoA + AH2. The polypeptide is Probable acyl-CoA dehydrogenase YdiO (ydiO) (Escherichia coli O157:H7).